The following is a 356-amino-acid chain: Methionine import ATP-binding protein MetN (356 aa).

Residues 7–250 enclose the ABC transporter domain; the sequence is IKLDNIDVTF…PRESLTQDFI (244 aa). 43–50 provides a ligand contact to ATP; the sequence is GYSGAGKS.

The protein belongs to the ABC transporter superfamily. Methionine importer (TC 3.A.1.24) family. The complex is composed of two ATP-binding proteins (MetN), two transmembrane proteins (MetI) and a solute-binding protein (MetQ).

It is found in the cell membrane. It catalyses the reaction L-methionine(out) + ATP + H2O = L-methionine(in) + ADP + phosphate + H(+). The enzyme catalyses D-methionine(out) + ATP + H2O = D-methionine(in) + ADP + phosphate + H(+). Functionally, part of the ABC transporter complex MetNIQ involved in methionine import. Responsible for energy coupling to the transport system. This Streptococcus agalactiae serotype III (strain NEM316) protein is Methionine import ATP-binding protein MetN.